Here is a 670-residue protein sequence, read N- to C-terminus: Major fimbrium tip subunit FimD (670 aa).

Residues 1-24 (MRTNRILNIICPPILFLLVGFLFG) form the signal peptide. Residue cysteine 25 is the site of N-palmitoyl cysteine attachment. A lipid anchor (S-diacylglycerol cysteine) is attached at cysteine 25. Positions 25-50 (CVREDIESDMNETSSLFLQVQPYNQR) are excised as a propeptide.

This sequence belongs to the FimD family. As to quaternary structure, fimbriae are composed of a major, structural subunit and the minor components FimC, FimD and FimE. Identified in a complex composed of FimC, FimD and FimE (in vitro). The complex interacts with host extracellular matrix proteins, including fibronectin and type I collagen. Interacts with host CXCR4.

It localises to the fimbrium. It is found in the cell outer membrane. In terms of biological role, probably a component of the fimbrium tip. These long, filamentous pili are attached to the cell surface; they mediate biofilm formation, adhesion onto host cells and onto other bacteria that are part of the oral microbiome. They play an important role in invasion of periodontal tissues and are major virulence factors. FimC, FimD and FimE contribute to interaction with host CXCR4 and thereby down-regulate the TLR2-mediated host immune response. The polypeptide is Major fimbrium tip subunit FimD (Porphyromonas gingivalis (strain ATCC 33277 / DSM 20709 / CIP 103683 / JCM 12257 / NCTC 11834 / 2561)).